The sequence spans 349 residues: MSKKKLSKGQQRRVSANHQRRLKKTESKVEWEDSQLGDAQEGIIISRFGMHADVEATDGVVHRCNIRRTLSSLVTGDRVVWRPGHESLAGISGIVEAVHPRHSVLTRPDYYDGIKPIAANIDQIVIVSAILPELSLNIIDRYLVACETLEIEPLIVLNKIDLLDDESRQFVDKLMDIYRALNYRVLMVSSHTQQGIPELEQALTDRISIFAGQSGVGKSSLLNALLALDEERILVNEVSDNSGLGQHTTTASRLYHFPHGGDVIDSPGVREFGLWHLEPEQVTRGFIELRQYIGSCKFRDCKHENDPGCAINAALDRGEIAVERYDNYHRILESMAQVKTRKGFSDTDN.

Over residues 1-11 the composition is skewed to basic residues; it reads MSKKKLSKGQQ. Residues 1-29 form a disordered region; that stretch reads MSKKKLSKGQQRRVSANHQRRLKKTESKV. One can recognise a CP-type G domain in the interval 102–272; that stretch reads HSVLTRPDYY…VIDSPGVREF (171 aa). GTP-binding positions include 158–161 and 212–220; these read NKID and GQSGVGKSS. The Zn(2+) site is built by Cys296, Cys301, His303, and Cys309.

It belongs to the TRAFAC class YlqF/YawG GTPase family. RsgA subfamily. As to quaternary structure, monomer. Associates with 30S ribosomal subunit, binds 16S rRNA. Requires Zn(2+) as cofactor.

It localises to the cytoplasm. In terms of biological role, one of several proteins that assist in the late maturation steps of the functional core of the 30S ribosomal subunit. Helps release RbfA from mature subunits. May play a role in the assembly of ribosomal proteins into the subunit. Circularly permuted GTPase that catalyzes slow GTP hydrolysis, GTPase activity is stimulated by the 30S ribosomal subunit. The chain is Small ribosomal subunit biogenesis GTPase RsgA from Pectobacterium carotovorum subsp. carotovorum (strain PC1).